Reading from the N-terminus, the 356-residue chain is GDP-mannose:di-myo-inositol-1,3'-phosphate beta-1,2-mannosyltransferase (356 aa).

The protein belongs to the MDIP synthase family. Mg(2+) is required as a cofactor.

The enzyme catalyses bis(myo-inositol) 1,3'-phosphate + GDP-alpha-D-mannose = 2-O-(beta-D-mannosyl)-bis(myo-inositol) 1,3'-phosphate + GDP + H(+). It catalyses the reaction 2-O-(beta-D-mannosyl)-bis(myo-inositol) 1,3'-phosphate + GDP-alpha-D-mannose = 2-O-(beta-D-mannosyl-(1-&gt;2)-beta-D-mannosyl)-bis(myo-inositol) 1,3'-phosphate + GDP + H(+). It carries out the reaction bis(myo-inositol) 1,3'-phosphate + 2 GDP-alpha-D-mannose = 2-O-(beta-D-mannosyl-(1-&gt;2)-beta-D-mannosyl)-bis(myo-inositol) 1,3'-phosphate + 2 GDP + 2 H(+). Catalyzes the transfer of the mannosyl group from GDP-mannose to di-myo-inositol-1,3'-phosphate (DIP), producing mannosyl-di-myo-inositol phosphate (MDIP). Can also use MDIP as an acceptor of a second mannose residue, yielding di-mannosyl-di-myo-inositol phosphate (MMDIP). Minor amounts of the tri-mannosylated form are also formed. This is GDP-mannose:di-myo-inositol-1,3'-phosphate beta-1,2-mannosyltransferase from Thermotoga maritima (strain ATCC 43589 / DSM 3109 / JCM 10099 / NBRC 100826 / MSB8).